The chain runs to 651 residues: Acetyl-coenzyme A synthetase 1 (651 aa).

CoA contacts are provided by residues 191-194 (RGGK), Thr311, and Asn335. Residues 387–389 (GEP), 411–416 (DTWWQT), Asp500, and Arg515 contribute to the ATP site. A CoA-binding site is contributed by Ser523. Arg526 is an ATP binding site. Mg(2+) contacts are provided by Val537, His539, and Val542. Arg584 contacts CoA. Lys609 bears the N6-acetyllysine mark.

It belongs to the ATP-dependent AMP-binding enzyme family. Mg(2+) serves as cofactor. In terms of processing, acetylated. Deacetylation by the SIR2-homolog deacetylase activates the enzyme.

The catalysed reaction is acetate + ATP + CoA = acetyl-CoA + AMP + diphosphate. In terms of biological role, catalyzes the conversion of acetate into acetyl-CoA (AcCoA), an essential intermediate at the junction of anabolic and catabolic pathways. AcsA undergoes a two-step reaction. In the first half reaction, AcsA combines acetate with ATP to form acetyl-adenylate (AcAMP) intermediate. In the second half reaction, it can then transfer the acetyl group from AcAMP to the sulfhydryl group of CoA, forming the product AcCoA. This chain is Acetyl-coenzyme A synthetase 1, found in Pseudomonas aeruginosa (strain ATCC 15692 / DSM 22644 / CIP 104116 / JCM 14847 / LMG 12228 / 1C / PRS 101 / PAO1).